A 369-amino-acid polypeptide reads, in one-letter code: Cyclic AMP receptor-like protein A (369 aa).

Residues 1–4 lie on the Extracellular side of the membrane; it reads MIQI. Residues 5–22 form a helical membrane-spanning segment; sequence LLSTFISFIIIIVSSNDI. Topologically, residues 23-72 are cytoplasmic; the sequence is RSGENDNFNNNKMINNFLTTITTNDTIIIKETESPNDYDFSKEQIESLDK. Residues 73 to 93 traverse the membrane as a helical segment; sequence IVYFSSTMGIVGALFIIVSFF. Topologically, residues 94-100 are extracellular; the sequence is LFKAART. A helical membrane pass occupies residues 101-121; the sequence is FATKMIFFLSLSDLFAAIFYL. Residues 122-146 lie on the Cytoplasmic side of the membrane; the sequence is PYYRDSDIMCNLQGMGLVFFLSSSY. Residues 147–167 traverse the membrane as a helical segment; that stretch reads LWTMCISISLFMVFFTTIFEL. Topologically, residues 168 to 173 are extracellular; sequence NHWFKY. A helical transmembrane segment spans residues 174–194; that stretch reads FHFICWGIPLFTAIISLIFHA. The Cytoplasmic portion of the chain corresponds to 195–212; that stretch reads YGKTGSWCFISDPTSIFR. Residues 213 to 233 traverse the membrane as a helical segment; that stretch reads LLYYLPLIVVFFINLVVFIAI. Residues 234 to 247 are Extracellular-facing; the sequence is RWKISQHSNSLVSR. The chain crosses the membrane as a helical span at residues 248–268; it reads VNIIVSFYLIAFSLSQLPTII. Residues 269–369 are Cytoplasmic-facing; it reads NSIQNFSDPD…KLIIDDYNRV (101 aa).

This sequence belongs to the G-protein coupled receptor 5 family.

Its subcellular location is the membrane. Its function is as follows. Receptor for cAMP which may play a role in prestalk cell differentiation. May act as a negative regulator of cell growth. This is Cyclic AMP receptor-like protein A (crlA) from Dictyostelium discoideum (Social amoeba).